A 157-amino-acid polypeptide reads, in one-letter code: WPP domain-containing protein 3 (157 aa).

The span at 1 to 20 (MAETADTINTTVSTPQPQLE) shows a compositional bias: polar residues. The interval 1-41 (MAETADTINTTVSTPQPQLESRSDETSCLQKHRSDATSEVT) is disordered. Residues 32–41 (HRSDATSEVT) show a composition bias toward basic and acidic residues. A WPP; degenerate region spans residues 37–138 (TSEVTKEEKS…IESAEVRFKA (102 aa)).

Expressed in roots, stems and leaves.

It localises to the cytoplasm. The protein localises to the nucleus. Its function is as follows. Regulates the mitotic activity in roots. In Arabidopsis thaliana (Mouse-ear cress), this protein is WPP domain-containing protein 3 (WPP3).